Consider the following 348-residue polypeptide: D-alanine--D-alanine ligase (348 aa).

Positions 132–334 constitute an ATP-grasp domain; that stretch reads KRILEVAGVP…YSDIIKELVV (203 aa). Residue 162 to 217 coordinates ATP; the sequence is LEKLTFPVFVKPANMGSSVGISKAENESELRSAIDLALKYDSRILIEQGVVAREIE. Residues Asp288, Glu301, and Asn303 each coordinate Mg(2+).

The protein belongs to the D-alanine--D-alanine ligase family. It depends on Mg(2+) as a cofactor. The cofactor is Mn(2+).

Its subcellular location is the cytoplasm. It catalyses the reaction 2 D-alanine + ATP = D-alanyl-D-alanine + ADP + phosphate + H(+). It functions in the pathway cell wall biogenesis; peptidoglycan biosynthesis. In terms of biological role, cell wall formation. The chain is D-alanine--D-alanine ligase from Streptococcus thermophilus (strain CNRZ 1066).